Consider the following 310-residue polypeptide: Coproporphyrin III ferrochelatase (310 aa).

Residues His184 and Glu265 each coordinate Fe(2+).

Belongs to the ferrochelatase family.

It is found in the cytoplasm. It catalyses the reaction Fe-coproporphyrin III + 2 H(+) = coproporphyrin III + Fe(2+). Its pathway is porphyrin-containing compound metabolism; protoheme biosynthesis. Functionally, involved in coproporphyrin-dependent heme b biosynthesis. Catalyzes the insertion of ferrous iron into coproporphyrin III to form Fe-coproporphyrin III. The chain is Coproporphyrin III ferrochelatase from Limosilactobacillus reuteri (strain DSM 20016) (Lactobacillus reuteri).